A 134-amino-acid chain; its full sequence is Interleukin-5 (134 aa).

An N-terminal signal peptide occupies residues 1-21; that stretch reads MRMHLHLTLVALGAAYVCANA. N-linked (GlcNAc...) asparagine glycosylation is found at asparagine 76 and asparagine 90.

It belongs to the IL-5 family. Homodimer; disulfide-linked. Interacts with IL5RA. Interacts with CSF2RB.

It localises to the secreted. Functionally, homodimeric cytokine expressed predominantly by T-lymphocytes and NK cells that plays an important role in the survival, differentiation, and chemotaxis of eosinophils. Also acts on activated and resting B-cells to induce immunoglobulin production, growth, and differentiation. Mechanistically, exerts its biological effects through a receptor composed of IL5RA subunit and the cytokine receptor common subunit beta/CSF2RB. Binding to the receptor leads to activation of various kinases including LYN, SYK and JAK2 and thereby propagates signals through the RAS-MAPK and JAK-STAT5 pathways respectively. This chain is Interleukin-5 (IL5), found in Bos taurus (Bovine).